We begin with the raw amino-acid sequence, 86 residues long: Protein IDA-LIKE 1 (86 aa).

Residues 1 to 27 (MNLSHKTMFMTLYIVFLLIFGSYNATA) form the signal peptide.

As to expression, expressed in roots.

Its subcellular location is the secreted. It is found in the extracellular space. In terms of biological role, involved in an ethylene-independent separation step of floral abscission. May act with RLK5 and HSL2 as ligand-receptor pairs. This is Protein IDA-LIKE 1 (IDL1) from Arabidopsis thaliana (Mouse-ear cress).